Consider the following 376-residue polypeptide: ORC1-type DNA replication protein 2 (376 aa).

Residues 73 to 77, Y209, and R221 contribute to the ATP site; that span reads TGKTS.

This sequence belongs to the CDC6/cdc18 family.

Its function is as follows. Involved in regulation of DNA replication. This chain is ORC1-type DNA replication protein 2 (cdc6-2), found in Archaeoglobus fulgidus (strain ATCC 49558 / DSM 4304 / JCM 9628 / NBRC 100126 / VC-16).